The primary structure comprises 95 residues: Small ribosomal subunit protein bS16 (95 aa).

It belongs to the bacterial ribosomal protein bS16 family.

The sequence is that of Small ribosomal subunit protein bS16 from Mycoplasma genitalium (strain ATCC 33530 / DSM 19775 / NCTC 10195 / G37) (Mycoplasmoides genitalium).